The sequence spans 87 residues: Small ribosomal subunit protein bS20 (87 aa).

A compositionally biased stretch (basic residues) spans 1–11 (MANIKSAKKRA). The tract at residues 1–27 (MANIKSAKKRAVQSEKRRQHNASQRSM) is disordered.

It belongs to the bacterial ribosomal protein bS20 family.

Its function is as follows. Binds directly to 16S ribosomal RNA. This Histophilus somni (strain 129Pt) (Haemophilus somnus) protein is Small ribosomal subunit protein bS20.